The chain runs to 876 residues: Alanine--tRNA ligase (876 aa).

N6-acetyllysine is present on K74. Residues H564, H568, C666, and H670 each coordinate Zn(2+).

It belongs to the class-II aminoacyl-tRNA synthetase family. In terms of assembly, homotetramer. The cofactor is Zn(2+).

It localises to the cytoplasm. It catalyses the reaction tRNA(Ala) + L-alanine + ATP = L-alanyl-tRNA(Ala) + AMP + diphosphate. In terms of biological role, catalyzes the attachment of alanine to tRNA(Ala) in a two-step reaction: alanine is first activated by ATP to form Ala-AMP and then transferred to the acceptor end of tRNA(Ala). Also edits incorrectly charged Ser-tRNA(Ala) and Gly-tRNA(Ala) via its editing domain. The chain is Alanine--tRNA ligase from Shigella sonnei (strain Ss046).